A 260-amino-acid chain; its full sequence is Snake venom serine protease serpentokallikrein-1 (260 aa).

A signal peptide spans 1 to 18 (MVLIRVLANLLILQLSYA). Residues 19–24 (QRTSEL) constitute a propeptide that is removed on maturation. The Peptidase S1 domain occupies 25-251 (VIGGDECNIN…HLDWIKSIIA (227 aa)). Disulfide bonds link C31-C165, C52-C68, C102-C258, C144-C212, C176-C191, and C202-C227. Catalysis depends on H67, which acts as the Charge relay system. N-linked (GlcNAc...) asparagine glycans are attached at residues N81 and N105. Residue D112 is the Charge relay system of the active site. N156 and N172 each carry an N-linked (GlcNAc...) asparagine glycan. The active-site Charge relay system is the S206.

This sequence belongs to the peptidase S1 family. Snake venom subfamily. In terms of assembly, monomer. In terms of tissue distribution, expressed by the venom gland.

It localises to the secreted. Functionally, snake venom serine protease that may act in the hemostasis system of the prey. The polypeptide is Snake venom serine protease serpentokallikrein-1 (Protobothrops mucrosquamatus (Taiwan habu)).